The following is a 266-amino-acid chain: MAVVGVPGWIGSSSVNETGQRWMSQAAGQLRLGVPCWMSQFAGRSREIIHTLGADHNFNGQWFRDRCFEAGSAPIVFNITGDLVSYSKDVPLFFMYGDTPNEYVVLNIHGGVHMWGRGGNGGYTHSGGDGNGTQGGHVIQNDIGGRLRIWNYGVIAAGGGGGGGIAYRPHSGAKWQDIGGGGGRPFGGAGGGRYSGGAASYEGPGGGYDYGNAHSGAGGNAGAAGQNAWSDGGKVLKVGVGGASGHAVFGSSPTWGVVGTIYGPRV.

10 short sequence motifs (GRM) span residues glycine 116 to tyrosine 123, serine 126 to histidine 137, alanine 157 to serine 171, lysine 174 to arginine 184, glycine 187 to glycine 191, tyrosine 194 to serine 200, glutamate 202 to aspartate 209, histidine 214 to asparagine 220, alanine 223 to alanine 228, and glycine 232 to histidine 246.

The protein belongs to the receptor-recognizing protein gp38 family.

It localises to the virion. Its function is as follows. Receptor binding protein (RBP) that is at the tip of the long tail fibers and serves as the phage recognition site for the attachment host receptor. Probably uses the host receptor OmpA. The polypeptide is Receptor-recognizing protein gp38 (38) (Enterobacteria phage Ox2 (Bacteriophage Ox2)).